A 290-amino-acid polypeptide reads, in one-letter code: ATP synthase gamma chain (290 aa).

Belongs to the ATPase gamma chain family. As to quaternary structure, F-type ATPases have 2 components, CF(1) - the catalytic core - and CF(0) - the membrane proton channel. CF(1) has five subunits: alpha(3), beta(3), gamma(1), delta(1), epsilon(1). CF(0) has three main subunits: a, b and c.

The protein localises to the cell inner membrane. Produces ATP from ADP in the presence of a proton gradient across the membrane. The gamma chain is believed to be important in regulating ATPase activity and the flow of protons through the CF(0) complex. This chain is ATP synthase gamma chain, found in Buchnera aphidicola subsp. Acyrthosiphon pisum (strain APS) (Acyrthosiphon pisum symbiotic bacterium).